The chain runs to 224 residues: Deoxyribose-phosphate aldolase (224 aa).

The active-site Proton donor/acceptor is the D94. K156 acts as the Schiff-base intermediate with acetaldehyde in catalysis. Catalysis depends on K184, which acts as the Proton donor/acceptor.

The protein belongs to the DeoC/FbaB aldolase family. DeoC type 1 subfamily.

Its subcellular location is the cytoplasm. The enzyme catalyses 2-deoxy-D-ribose 5-phosphate = D-glyceraldehyde 3-phosphate + acetaldehyde. The protein operates within carbohydrate degradation; 2-deoxy-D-ribose 1-phosphate degradation; D-glyceraldehyde 3-phosphate and acetaldehyde from 2-deoxy-alpha-D-ribose 1-phosphate: step 2/2. In terms of biological role, catalyzes a reversible aldol reaction between acetaldehyde and D-glyceraldehyde 3-phosphate to generate 2-deoxy-D-ribose 5-phosphate. This chain is Deoxyribose-phosphate aldolase, found in Methanocella arvoryzae (strain DSM 22066 / NBRC 105507 / MRE50).